We begin with the raw amino-acid sequence, 380 residues long: MLKRKKLLQGFLKFLPLIIPATIFVSCARRESNHLIFNISLDHDADASISKFFELYSNNLSKKLDKKVTVSFNIIDDSFTKISNIQTAKADFAFVNSQSIKDNGIEEFNLILQTQTDAFKEDTNLDYYSDGQLKSKAEKMTTLFSKTPYKDWEDTAQQWTGSRYNFLYETNKLINFYRGMILITGSEEEIKKIKEAWDQKKWSDFMNYGIGHGSSGSAGKFQLPDLLLRKHFGSSYPGLQNAINQNPDKFANVRGREIGRDNKIKIVFDDANSFAWTHNDKNATNHFYTPTENNGKGDSEKSNNKNNKVEILTYTDPMLYDIGIVSDTLSDRYQKAIAEVFVELAKTKQDIYGPSYGYNGYNLITDPNKEILDVIHKTYG.

A signal peptide spans 1-26 (MLKRKKLLQGFLKFLPLIIPATIFVS). Cysteine 27 carries the N-palmitoyl cysteine lipid modification. Cysteine 27 carries S-diacylglycerol cysteine lipidation. Residues 285–304 (NHFYTPTENNGKGDSEKSNN) are disordered.

Its subcellular location is the cell membrane. In terms of biological role, P37 is part of a high-affinity transport system. This Mycoplasma pneumoniae (strain ATCC 29342 / M129 / Subtype 1) (Mycoplasmoides pneumoniae) protein is High affinity transport system protein p37 (p37).